The chain runs to 181 residues: Isopentenyl-diphosphate Delta-isomerase (181 aa).

Residues His-25 and His-32 each coordinate Mn(2+). The 135-residue stretch at 30–164 (PLHLAFSCWL…PWAFSPWMVM (135 aa)) folds into the Nudix hydrolase domain. Cys-67 is an active-site residue. Cys-67 is a Mg(2+) binding site. His-69 serves as a coordination point for Mn(2+). Glu-87 lines the Mg(2+) pocket. Mn(2+) contacts are provided by Glu-114 and Glu-116. Residue Glu-116 is part of the active site.

Belongs to the IPP isomerase type 1 family. Homodimer. Requires Mg(2+) as cofactor. Mn(2+) is required as a cofactor.

The protein resides in the cytoplasm. The enzyme catalyses isopentenyl diphosphate = dimethylallyl diphosphate. Its pathway is isoprenoid biosynthesis; dimethylallyl diphosphate biosynthesis; dimethylallyl diphosphate from isopentenyl diphosphate: step 1/1. Functionally, catalyzes the 1,3-allylic rearrangement of the homoallylic substrate isopentenyl (IPP) to its highly electrophilic allylic isomer, dimethylallyl diphosphate (DMAPP). This Salmonella typhi protein is Isopentenyl-diphosphate Delta-isomerase.